Consider the following 126-residue polypeptide: Protein mmf2, mitochondrial (126 aa).

Belongs to the RutC family.

Its subcellular location is the mitochondrion. It is found in the cytoplasm. In terms of biological role, plays a role in the maintenance of mitochondrial DNA. This is Protein mmf2, mitochondrial (mmf2) from Schizosaccharomyces pombe (strain 972 / ATCC 24843) (Fission yeast).